Here is a 142-residue protein sequence, read N- to C-terminus: Hemoglobin subunit pi (142 aa).

The 141-residue stretch at 2–142 folds into the Globin domain; the sequence is TLTQAEKAAV…VSSVLTEKYR (141 aa). Heme b-binding residues include histidine 59 and histidine 88.

The protein belongs to the globin family.

Functionally, the pi' chain is the counterpart of the alpha chain in the major early embryonic hemoglobin P. This chain is Hemoglobin subunit pi, found in Cairina moschata (Muscovy duck).